A 298-amino-acid polypeptide reads, in one-letter code: Probable endonuclease 4 (298 aa).

Residues H69, H111, E146, D180, H183, H215, D228, H230, and E260 each contribute to the Zn(2+) site.

It belongs to the AP endonuclease 2 family. The cofactor is Zn(2+).

The enzyme catalyses Endonucleolytic cleavage to 5'-phosphooligonucleotide end-products.. Functionally, endonuclease IV plays a role in DNA repair. It cleaves phosphodiester bonds at apurinic or apyrimidinic (AP) sites, generating a 3'-hydroxyl group and a 5'-terminal sugar phosphate. In Bacillus anthracis (strain A0248), this protein is Probable endonuclease 4.